Consider the following 462-residue polypeptide: TNF receptor-associated factor family protein DDB_G0267754 (462 aa).

Residues 24 to 62 form an RING-type; degenerate zinc finger; that stretch reads CCVCECLLIEALQCRNGHVACKNCFIKIVKSKKECMTCR. Positions 104–127 are disordered; the sequence is KNGNGNEGSSANEIEQPQQPQQQQ. 2 TRAF-type zinc fingers span residues 150–217 and 214–273; these read SHLK…SHTE and SHTE…NQLA. The MATH domain occupies 326 to 449; that stretch reads MFRGKWVISN…NDTLTINFSI (124 aa).

Belongs to the TNF receptor-associated factor family. A subfamily.

It localises to the cytoplasm. Its function is as follows. Probable adapter protein and signal transducer that links members of the tumor necrosis factor receptor family to different signaling pathways by association with the receptor cytoplasmic domain and kinases. The polypeptide is TNF receptor-associated factor family protein DDB_G0267754 (Dictyostelium discoideum (Social amoeba)).